The chain runs to 479 residues: Baeyer-Villiger monooxygenase AacuH (479 aa).

The interval 14–34 is disordered; that stretch reads DSLGHPDGASRPPVSAESLSR.

This sequence belongs to the AflY oxidoreductase family.

Its pathway is secondary metabolite biosynthesis. Its function is as follows. Baeyer-Villiger monooxygenase; part of the gene cluster that mediates the biosynthesis of the tetrahydroxanthone dimer secalonic acid D. The pathway begins with the synthesis of atrochrysone thioester by the polyketide synthase AacuL. The atrochrysone carboxyl ACP thioesterase AacuM then breaks the thioester bond and releases the atrochrysone carboxylic acid from AacuL. Atrochrysone carboxylic acid is decarboxylated by the decarboxylase AacuI, and oxidized by the anthrone oxygenase AacuG to yield emodin. Emodin is then reduced to emodin hydroquinone by a yet unidentified oxidoreductase. A-ring reduction by the short chain dehydrogenase AacuN, dehydration by the scytalone dehydratase-like protein AacuK and probable spontaneous re-oxidation, results in overall deoxygenation to chrysophanol. Baeyer-Villiger oxidation by the Baeyer-Villiger monooxygenase (BVMO) AacuH then yields monodictyphenone. Monodictyphenone is transformed into compounds with the tetrahydroxanthone skeleton via methylesterification by the methyltransferase AacuQ, followed by the action of the flavin-dependent monooxygenase AacuC, the isomerase AacuP, and the short chain dehydrogenase/reductase AacuF or AacuD. AacuF and AacuD should accept the same compound as a substrate but perform the ketoreduction with a different stereoselectivity, thus yielding blennolides B and A, respectively. In the final step of the biosynthesis, the cytochrome P450 monooxygenase AacuE accepts blennolide B and/or blennolide A to conduct the dimerization reaction to furnish the tetrahydroxanthone dimers, secalonic acids D, B, and F. This is Baeyer-Villiger monooxygenase AacuH from Aspergillus aculeatus (strain ATCC 16872 / CBS 172.66 / WB 5094).